The primary structure comprises 691 residues: DNA ligase (691 aa).

NAD(+) contacts are provided by residues 41–45 (DAEYD), 90–91 (SL), and E130. Residue K132 is the N6-AMP-lysine intermediate of the active site. Residues R153, E190, K307, and K331 each coordinate NAD(+). Residues C425, C428, C443, and C449 each coordinate Zn(2+). The BRCT domain maps to 610–691 (APQGVLAGKT…LHQLLEGNTQ (82 aa)).

This sequence belongs to the NAD-dependent DNA ligase family. LigA subfamily. Mg(2+) is required as a cofactor. The cofactor is Mn(2+).

The enzyme catalyses NAD(+) + (deoxyribonucleotide)n-3'-hydroxyl + 5'-phospho-(deoxyribonucleotide)m = (deoxyribonucleotide)n+m + AMP + beta-nicotinamide D-nucleotide.. DNA ligase that catalyzes the formation of phosphodiester linkages between 5'-phosphoryl and 3'-hydroxyl groups in double-stranded DNA using NAD as a coenzyme and as the energy source for the reaction. It is essential for DNA replication and repair of damaged DNA. The chain is DNA ligase from Burkholderia vietnamiensis (strain G4 / LMG 22486) (Burkholderia cepacia (strain R1808)).